A 328-amino-acid chain; its full sequence is Cytochrome c biogenesis protein CcsA (328 aa).

8 consecutive transmembrane segments (helical) span residues 13–33 (ISFS…LVNL), 46–66 (GIVI…IYSG), 73–93 (LYES…ISYF), 101–121 (LNAI…SGLL), 146–166 (MILG…LLVI), 234–254 (IISL…VWAN), 263–283 (WDPK…FLHI), and 295–315 (AIVA…VNLL).

Belongs to the CcmF/CycK/Ccl1/NrfE/CcsA family. In terms of assembly, may interact with Ccs1.

Its subcellular location is the plastid. The protein localises to the chloroplast thylakoid membrane. Required during biogenesis of c-type cytochromes (cytochrome c6 and cytochrome f) at the step of heme attachment. This Arabis hirsuta (Hairy rock-cress) protein is Cytochrome c biogenesis protein CcsA.